A 189-amino-acid chain; its full sequence is Ribosome maturation factor RimM (189 aa).

In terms of domain architecture, PRC barrel spans 113–189 (DGEYYWVDLL…TIVADWQPDY (77 aa)).

It belongs to the RimM family. In terms of assembly, binds ribosomal protein uS19.

The protein localises to the cytoplasm. In terms of biological role, an accessory protein needed during the final step in the assembly of 30S ribosomal subunit, possibly for assembly of the head region. Essential for efficient processing of 16S rRNA. May be needed both before and after RbfA during the maturation of 16S rRNA. It has affinity for free ribosomal 30S subunits but not for 70S ribosomes. This Delftia acidovorans (strain DSM 14801 / SPH-1) protein is Ribosome maturation factor RimM.